The following is a 351-amino-acid chain: MKGIIYLEDGTVFYGTGFGKEGNEFGEIVFNTSMTGYQEILTDPSYAGQIINMTYPLIGNYGVNESVNQSKCVYAKGFIVKNIDENPSNYTSEINIDQMLKNMGVVGVFGVDTRSITKKIRSYGTMKCIISNGELSIEELKKMMDASNIVDDYVNTVSTKEIIHIAGNGNKVAVMDFGIKNDIIENLKERQCDITIFPYDTDYNEILNINPDGIFLSNGPGDPKSIPEAIENVKKLIGKRPMFGICLGHQIIALASGGNTYKLKYGHRGGNHGIYDVQRDKAYITAQNHGYAVDEESVLENGMIITHRNLNDGTVEGMKHKSIPLFSVQFHPEGAPGPTDTTYLFDQFVNL.

The CPSase stretch occupies residues 1-171 (MKGIIYLEDG…IIHIAGNGNK (171 aa)). L-glutamine-binding residues include Ser-45, Gly-219, and Gly-221. One can recognise a Glutamine amidotransferase type-1 domain in the interval 171–351 (KVAVMDFGIK…TYLFDQFVNL (181 aa)). The active-site Nucleophile is Cys-246. L-glutamine-binding residues include Leu-247, Gln-250, Asn-288, Gly-290, and Tyr-291. Active-site residues include His-331 and Glu-333.

It belongs to the CarA family. Composed of two chains; the small (or glutamine) chain promotes the hydrolysis of glutamine to ammonia, which is used by the large (or ammonia) chain to synthesize carbamoyl phosphate. Tetramer of heterodimers (alpha,beta)4.

It carries out the reaction hydrogencarbonate + L-glutamine + 2 ATP + H2O = carbamoyl phosphate + L-glutamate + 2 ADP + phosphate + 2 H(+). The enzyme catalyses L-glutamine + H2O = L-glutamate + NH4(+). Its pathway is amino-acid biosynthesis; L-arginine biosynthesis; carbamoyl phosphate from bicarbonate: step 1/1. The protein operates within pyrimidine metabolism; UMP biosynthesis via de novo pathway; (S)-dihydroorotate from bicarbonate: step 1/3. Small subunit of the glutamine-dependent carbamoyl phosphate synthetase (CPSase). CPSase catalyzes the formation of carbamoyl phosphate from the ammonia moiety of glutamine, carbonate, and phosphate donated by ATP, constituting the first step of 2 biosynthetic pathways, one leading to arginine and/or urea and the other to pyrimidine nucleotides. The small subunit (glutamine amidotransferase) binds and cleaves glutamine to supply the large subunit with the substrate ammonia. This Clostridium acetobutylicum (strain ATCC 824 / DSM 792 / JCM 1419 / IAM 19013 / LMG 5710 / NBRC 13948 / NRRL B-527 / VKM B-1787 / 2291 / W) protein is Carbamoyl phosphate synthase small chain.